We begin with the raw amino-acid sequence, 55 residues long: Large ribosomal subunit protein bL33 (55 aa).

The protein belongs to the bacterial ribosomal protein bL33 family.

The protein is Large ribosomal subunit protein bL33 of Rhodopseudomonas palustris (strain HaA2).